The primary structure comprises 396 residues: Flavohemoprotein (396 aa).

Residues 1 to 136 (MLDAQTIATV…LANVFINREA (136 aa)) form the Globin domain. His-85 is a heme b binding site. Catalysis depends on charge relay system residues Tyr-95 and Glu-135. Residues 147–396 (GGWEGTRDFR…YECFGPHKVL (250 aa)) form a reductase region. The FAD-binding FR-type domain maps to 150-255 (EGTRDFRIVA…VAPAGDFFMA (106 aa)). FAD-binding positions include Tyr-188 and 204–207 (RQYS). 268-273 (GVGQTP) serves as a coordination point for NADP(+). 389–392 (CFGP) is an FAD binding site.

This sequence belongs to the globin family. Two-domain flavohemoproteins subfamily. In the C-terminal section; belongs to the flavoprotein pyridine nucleotide cytochrome reductase family. Monomer. Requires FAD as cofactor. Heme b is required as a cofactor.

It localises to the cytoplasm. The catalysed reaction is 2 nitric oxide + NADPH + 2 O2 = 2 nitrate + NADP(+) + H(+). The enzyme catalyses 2 nitric oxide + NADH + 2 O2 = 2 nitrate + NAD(+) + H(+). Is involved in NO detoxification in an aerobic process, termed nitric oxide dioxygenase (NOD) reaction that utilizes O(2) and NAD(P)H to convert NO to nitrate, which protects the bacterium from various noxious nitrogen compounds. Therefore, plays a central role in the inducible response to nitrosative stress. Functionally, in the presence of oxygen and NADH, HMP has NADH oxidase activity, which leads to the generation of superoxide and H(2)O(2), both in vitro and in vivo, and it has been suggested that HMP might act as an amplifier of superoxide stress. Under anaerobic conditions, HMP also exhibits nitric oxide reductase and FAD reductase activities. However, all these reactions are much lower than NOD activity. In terms of biological role, various electron acceptors are also reduced by HMP in vitro, including dihydropterine, ferrisiderophores, ferric citrate, cytochrome c, nitrite, S-nitrosoglutathione, and alkylhydroperoxides. However, it is unknown if these reactions are of any biological significance in vivo. This Escherichia coli (strain K12) protein is Flavohemoprotein (hmp).